Consider the following 184-residue polypeptide: Protein GrpE (184 aa).

Over residues 1–26 the composition is skewed to polar residues; that stretch reads MANEQNEQAQDIQNEQVEQSNEQTQA. The segment at 1–34 is disordered; sequence MANEQNEQAQDIQNEQVEQSNEQTQAEGVEQAND.

It belongs to the GrpE family. As to quaternary structure, homodimer.

It localises to the cytoplasm. Its function is as follows. Participates actively in the response to hyperosmotic and heat shock by preventing the aggregation of stress-denatured proteins, in association with DnaK and GrpE. It is the nucleotide exchange factor for DnaK and may function as a thermosensor. Unfolded proteins bind initially to DnaJ; upon interaction with the DnaJ-bound protein, DnaK hydrolyzes its bound ATP, resulting in the formation of a stable complex. GrpE releases ADP from DnaK; ATP binding to DnaK triggers the release of the substrate protein, thus completing the reaction cycle. Several rounds of ATP-dependent interactions between DnaJ, DnaK and GrpE are required for fully efficient folding. The polypeptide is Protein GrpE (Acinetobacter baumannii (strain AB307-0294)).